The sequence spans 521 residues: Matrix metalloproteinase-A (521 aa).

The signal sequence occupies residues 1-21 (MFTGLHDILIILFLLVTLKIA). Positions 22–95 (QNVDHTKFLQ…EDHQKSRGKR (74 aa)) are cleaved as a propeptide — activation peptide. Residues 78–85 (PRCGHPDV) carry the Cysteine switch motif. Cys-80 serves as a coordination point for Zn(2+). At 96–500 (YAPPQFKWKE…FCPRNEKLVL (405 aa)) the chain is on the extracellular side. N-linked (GlcNAc...) asparagine glycosylation is present at Asn-199. His-215 contributes to the Zn(2+) binding site. The active site involves Glu-216. Zn(2+) is bound by residues His-219 and His-225. The disordered stretch occupies residues 259-298 (KASKKENEEEERKTENEDKRRKTEKDRGRTREHESDDIRP). Basic and acidic residues predominate over residues 261–298 (SKKENEEEERKTENEDKRRKTEKDRGRTREHESDDIRP). Hemopexin repeat units follow at residues 300–347 (ECRV…FPGL), 391–443 (EKYV…WARV), and 444–492 (PKGV…FGFC). An N-linked (GlcNAc...) asparagine glycan is attached at Asn-469. A helical transmembrane segment spans residues 501–521 (NSSSSHFSLIYATITILILIF).

It belongs to the peptidase M10A family. Requires Zn(2+) as cofactor. In terms of tissue distribution, expressed in the anchor cell. Expressed in the anchor cell throughout the L3 and the early L4 stage, but not in vulva precursor cells P6.p, P6.px, or P6.pxx. Expression in P6.pxxx cells begins in late-L4 stage. During L4 lethargus, expressed in all four vulE cells, but not in vulF cells. The expression in vulE cells persists in adulthood. In males, expressed in the linker cell (LC) from the early L4 stage until LC death during the L4-to-adult molt.

It localises to the cell membrane. The protein resides in the basolateral cell membrane. In terms of biological role, metalloprotease which, together with cadherin cdh-3 and hemicentin him-4, plays a role in anchor cell (AC) invasion during postembryonic vulval development probably by promoting the degradation of the basement membrane separating the gonad from the vulva epithelium. The sequence is that of Matrix metalloproteinase-A from Caenorhabditis elegans.